The sequence spans 237 residues: Splicing factor U2AF 35 kDa subunit (237 aa).

Alanine 2 carries the N-acetylalanine modification. A C3H1-type 1 zinc finger spans residues 12-40; it reads EKDKVNCSFYFKIGACRHGDRCSRLHNKP. Lysine 39 carries the N6-methyllysine modification. A phosphoserine mark is found at serine 61 and serine 145. An RRM domain is found at 65–147; that stretch reads LRCAVSDVEM…QPIHAELSPV (83 aa). The C3H1-type 2 zinc finger occupies 149–176; that stretch reads DFREACCRQYEMGECTRGGFCNFMHLKP. The residue at position 165 (arginine 165) is an Omega-N-methylarginine. Residues 185–237 form a disordered region; the sequence is LYGRRRKKHRSRSRSRERRSRSRDRGRGGGGGGGGGRERDRRRSRDRERSGRF. The segment covering 188–208 has biased composition (basic residues); the sequence is RRRKKHRSRSRSRERRSRSRD. Over residues 220–237 the composition is skewed to basic and acidic residues; sequence GRERDRRRSRDRERSGRF.

It belongs to the splicing factor SR family. Identified in the spliceosome C complex. Heterodimer with U2AF2. Interacts (via RS domain) with PHF5A (via N-terminus). Interacts with ZRANB2. Interacts with SDE2. Interacts with SF3B1.

The protein localises to the nucleus. It localises to the nucleus speckle. Functionally, plays a critical role in both constitutive and enhancer-dependent splicing by mediating protein-protein interactions and protein-RNA interactions required for accurate 3'-splice site selection. Recruits U2 snRNP to the branch point. Directly mediates interactions between U2AF2 and proteins bound to the enhancers and thus may function as a bridge between U2AF2 and the enhancer complex to recruit it to the adjacent intron. In Bos taurus (Bovine), this protein is Splicing factor U2AF 35 kDa subunit (U2AF1).